Reading from the N-terminus, the 459-residue chain is MDFDTITSISTPMGEGAIGIVRLSGPQAVEIGDKLYKGKKKLEDVDSHTINYGHIVDPETNEVVEEVMISVLRAPRTFTREDIIEINCHGGILTINRILELTMTHGARMAEPGEYTKRAFLNGRIDLSQAEAVMDFIRSKTDRASKVAMNQIEGRLSDLIKRQRQSILEILAQVEVNIDYPEYDDVEDATTEFLLEQSKKIKNEINLLLETGAQGKIMREGLSTVIVGKPNVGKSSMLNNLIQDNKAIVTEVAGTTRDVLEEYVNVRGVPLRLVDTAGIRDTEDIVEKIGVERSRKALSEADLILFVLNNNEPLTQEDRTLYEVIKNEDAIVIVNKTDLEQNLDINEVKEMIGDTPLIQTSMLKQEGIDQLELQIRDLFFGGDVQNQDMTYVSNSRHISLLKQARNAIQDAIDAAESGIPMDMVQIDLTRTWELLGEIIGESASDELIDQLFSQFCLGK.

The (6S)-5-formyl-5,6,7,8-tetrahydrofolate site is built by arginine 22, glutamate 85, and arginine 124. A TrmE-type G domain is found at 221–380 (GLSTVIVGKP…LELQIRDLFF (160 aa)). Asparagine 231 serves as a coordination point for K(+). Residues 231 to 236 (NVGKSS), 250 to 256 (TEVAGTT), and 275 to 278 (DTAG) contribute to the GTP site. Residue serine 235 participates in Mg(2+) binding. Threonine 250, valine 252, and threonine 255 together coordinate K(+). Threonine 256 lines the Mg(2+) pocket. Lysine 459 provides a ligand contact to (6S)-5-formyl-5,6,7,8-tetrahydrofolate.

This sequence belongs to the TRAFAC class TrmE-Era-EngA-EngB-Septin-like GTPase superfamily. TrmE GTPase family. As to quaternary structure, homodimer. Heterotetramer of two MnmE and two MnmG subunits. The cofactor is K(+).

The protein resides in the cytoplasm. Exhibits a very high intrinsic GTPase hydrolysis rate. Involved in the addition of a carboxymethylaminomethyl (cmnm) group at the wobble position (U34) of certain tRNAs, forming tRNA-cmnm(5)s(2)U34. The chain is tRNA modification GTPase MnmE from Staphylococcus haemolyticus (strain JCSC1435).